Here is a 1211-residue protein sequence, read N- to C-terminus: DNA polymerase III subunit alpha (1211 aa).

Belongs to the DNA polymerase type-C family. DnaE subfamily. In terms of assembly, DNA polymerase III contains a core (composed of alpha, epsilon and theta chains) that associates with a tau subunit. This core dimerizes to form the PolIII' complex. PolIII' associates with the gamma complex (composed of gamma, delta, delta', psi and chi chains) and with the beta chain to form the complete DNA polymerase III complex.

It is found in the cytoplasm. It carries out the reaction DNA(n) + a 2'-deoxyribonucleoside 5'-triphosphate = DNA(n+1) + diphosphate. DNA polymerase III is a complex, multichain enzyme responsible for most of the replicative synthesis in bacteria. This DNA polymerase also exhibits 3' to 5' exonuclease activity. The alpha chain is the DNA polymerase. This Helicobacter pylori (strain J99 / ATCC 700824) (Campylobacter pylori J99) protein is DNA polymerase III subunit alpha (dnaE).